The chain runs to 212 residues: Ribonuclease P protein component 3 (212 aa).

It belongs to the eukaryotic/archaeal RNase P protein component 3 family. In terms of assembly, consists of a catalytic RNA component and at least 5 protein subunits. Forms a heterotetrameric subcomplex with Rnp2. Reconstituted enzyme missing individual protein subunits is suboptimally active, showing each subunit contributes to optimization of activity.

The protein resides in the cytoplasm. It catalyses the reaction Endonucleolytic cleavage of RNA, removing 5'-extranucleotides from tRNA precursor.. Its function is as follows. Part of ribonuclease P, a protein complex that generates mature tRNA molecules by cleaving their 5'-ends. Not absolutely essential for activity in vitro, however it strongly stimulates activity. Binds RNase P RNA. In Pyrococcus horikoshii (strain ATCC 700860 / DSM 12428 / JCM 9974 / NBRC 100139 / OT-3), this protein is Ribonuclease P protein component 3.